A 265-amino-acid chain; its full sequence is Probable cyclic nucleotide phosphodiesterase SynWH7803_1390 (265 aa).

Fe cation is bound by residues Asp9, His11, Asp49, Asn86, His157, His196, and His198. AMP is bound by residues His11, Asp49, and 86–87 (NH). His198 contacts AMP.

This sequence belongs to the cyclic nucleotide phosphodiesterase class-III family. It depends on Fe(2+) as a cofactor.

The sequence is that of Probable cyclic nucleotide phosphodiesterase SynWH7803_1390 from Synechococcus sp. (strain WH7803).